A 266-amino-acid chain; its full sequence is MNKPIGVIDSGVGGLTVAKEIMRQLPNETIYYLGDIARCPYGPRPGDEVKQFTTQLANKLMQFDIKMLVIACNTATAVALEHLQQMLPIPVIGVIEPGSRTAIMTTKNQNVLILGTEGTIKSEAYRHHIKHINPNVHVYGVACPGFVPLVEQMRYDDPTITSIVIHQTLKQWRNTDADTIILGCTHYPLLYKPINDYFGGEKKVISSGLETAREVSALLTFSNEHASYTQHPEHRFFATGDTVHIKNIILQWLKLDVEVERISVDE.

Substrate contacts are provided by residues 9 to 10 (DS) and 41 to 42 (YG). The active-site Proton donor/acceptor is Cys-72. 73–74 (NT) is a substrate binding site. Cys-184 (proton donor/acceptor) is an active-site residue. 185 to 186 (TH) is a substrate binding site.

The protein belongs to the aspartate/glutamate racemases family.

It carries out the reaction L-glutamate = D-glutamate. The protein operates within cell wall biogenesis; peptidoglycan biosynthesis. Its function is as follows. Provides the (R)-glutamate required for cell wall biosynthesis. The sequence is that of Glutamate racemase from Staphylococcus haemolyticus (strain JCSC1435).